The chain runs to 257 residues: 3-dehydroquinate dehydratase (257 aa).

3-dehydroquinate contacts are provided by residues 50–52 (EWR) and R86. H147 serves as the catalytic Proton donor/acceptor. The active-site Schiff-base intermediate with substrate is K174. 3-dehydroquinate is bound by residues R216, S235, and Q239.

It belongs to the type-I 3-dehydroquinase family. As to quaternary structure, homodimer.

It catalyses the reaction 3-dehydroquinate = 3-dehydroshikimate + H2O. The protein operates within metabolic intermediate biosynthesis; chorismate biosynthesis; chorismate from D-erythrose 4-phosphate and phosphoenolpyruvate: step 3/7. Functionally, involved in the third step of the chorismate pathway, which leads to the biosynthesis of aromatic amino acids. Catalyzes the cis-dehydration of 3-dehydroquinate (DHQ) and introduces the first double bond of the aromatic ring to yield 3-dehydroshikimate. In Geobacillus thermodenitrificans (strain NG80-2), this protein is 3-dehydroquinate dehydratase.